The sequence spans 335 residues: tRNA N6-adenosine threonylcarbamoyltransferase (335 aa).

The Fe cation site is built by histidine 112 and histidine 116. Substrate contacts are provided by residues 134–138 (VVSGG), aspartate 167, glycine 180, and asparagine 273. Aspartate 301 provides a ligand contact to Fe cation.

This sequence belongs to the KAE1 / TsaD family. Requires Fe(2+) as cofactor.

The protein localises to the cytoplasm. It catalyses the reaction L-threonylcarbamoyladenylate + adenosine(37) in tRNA = N(6)-L-threonylcarbamoyladenosine(37) in tRNA + AMP + H(+). Required for the formation of a threonylcarbamoyl group on adenosine at position 37 (t(6)A37) in tRNAs that read codons beginning with adenine. Is involved in the transfer of the threonylcarbamoyl moiety of threonylcarbamoyl-AMP (TC-AMP) to the N6 group of A37, together with TsaE and TsaB. TsaD likely plays a direct catalytic role in this reaction. The protein is tRNA N6-adenosine threonylcarbamoyltransferase of Shouchella clausii (strain KSM-K16) (Alkalihalobacillus clausii).